Consider the following 364-residue polypeptide: UDP-N-acetylenolpyruvoylglucosamine reductase (364 aa).

The 167-residue stretch at 30-196 (LGGPATRLIT…LRVRFELEDA (167 aa)) folds into the FAD-binding PCMH-type domain. The active site involves Arg-173. The Proton donor role is filled by Ser-252. The active site involves Glu-356.

The protein belongs to the MurB family. FAD serves as cofactor.

The protein resides in the cytoplasm. The enzyme catalyses UDP-N-acetyl-alpha-D-muramate + NADP(+) = UDP-N-acetyl-3-O-(1-carboxyvinyl)-alpha-D-glucosamine + NADPH + H(+). The protein operates within cell wall biogenesis; peptidoglycan biosynthesis. In terms of biological role, cell wall formation. The sequence is that of UDP-N-acetylenolpyruvoylglucosamine reductase from Streptomyces avermitilis (strain ATCC 31267 / DSM 46492 / JCM 5070 / NBRC 14893 / NCIMB 12804 / NRRL 8165 / MA-4680).